We begin with the raw amino-acid sequence, 551 residues long: Solute carrier family 22 member 6 (551 aa).

Topologically, residues 1 to 9 (MAFNDLLKQ) are cytoplasmic. The chain crosses the membrane as a helical span at residues 10–30 (VGGVGRFQLIQVTMVVAPLLL). Over 31 to 135 (MASHNTLQNF…LVCSHRAFRQ (105 aa)) the chain is Extracellular. 4 N-linked (GlcNAc...) asparagine glycosylation sites follow: asparagine 39, asparagine 56, asparagine 92, and asparagine 113. Residues 136-156 (LAQSLYMVGVLLGAMVFGYLA) traverse the membrane as a helical segment. Residues 157 to 164 (DRLGRRKV) are Cytoplasmic-facing. Residues 165–187 (LILNYLQTAVSGTCAAYAPNYTV) form a helical membrane-spanning segment. Over 188–195 (YCVFRLLS) the chain is Extracellular. Residues 196-216 (GMSLASIAINCMTLNVEWMPI) form a helical membrane-spanning segment. The Cytoplasmic segment spans residues 217 to 224 (HTRAYVGT). Residues 225 to 245 (LIGYVYSLGQFLLAGIAYAVP) form a helical membrane-spanning segment. Residues 246–248 (HWR) lie on the Extracellular side of the membrane. A helical transmembrane segment spans residues 249–269 (HLQLVVSVPFFIAFIYSWFFI). The Cytoplasmic portion of the chain corresponds to 270–337 (ESARWYSSSG…ELLRCPTLRH (68 aa)). A helical membrane pass occupies residues 338-358 (LFLCLSMLWFATSFAYYGLVM). The Extracellular segment spans residues 359-368 (DLQGFGVSMY). Residues 369-389 (LIQVIFGAVDLPAKFVCFLVI) traverse the membrane as a helical segment. Residues 390-395 (NSMGRR) lie on the Cytoplasmic side of the membrane. Residues 396–416 (PAQMASLLLAGICILVNGIIP) traverse the membrane as a helical segment. Residues 417–425 (KSHTIIRTS) are Extracellular-facing. Residues 426 to 446 (LAVLGKGCLASSFNCIFLYTG) form a helical membrane-spanning segment. The Cytoplasmic portion of the chain corresponds to 447-484 (ELYPTVIRQTGLGMGSTMARVGSIVSPLVSMTAEFYPS). Residues 485 to 505 (MPLFIFGAVPVVASAVTALLP) form a helical membrane-spanning segment. Residues 506-551 (ETLGQPLPDTVQDLKSRSRGKQNQQQQEQQKQMMPLQASTQEKNGL) lie on the Extracellular side of the membrane. The segment at 514-551 (DTVQDLKSRSRGKQNQQQQEQQKQMMPLQASTQEKNGL) is disordered. Residues 526–537 (KQNQQQQEQQKQ) show a composition bias toward low complexity. The span at 542 to 551 (QASTQEKNGL) shows a compositional bias: polar residues.

The protein belongs to the major facilitator (TC 2.A.1) superfamily. Organic cation transporter (TC 2.A.1.19) family. Glycosylated. Glycosylation is necessary for proper targeting of the transporter to the plasma membrane. As to expression, highly expressed in kidney; in the particular segment of the proximal tubule. In kidney, found preferentially in the cortex and outer medulla and weakly in the inner medulla. Expressed to a lower extent in brain.

It is found in the cell membrane. It localises to the basolateral cell membrane. Its subcellular location is the basal cell membrane. The catalysed reaction is (6R)-L-erythro-5,6,7,8-tetrahydrobiopterin(out) + a dicarboxylate(in) = (6R)-L-erythro-5,6,7,8-tetrahydrobiopterin(in) + a dicarboxylate(out). It carries out the reaction L-erythro-7,8-dihydrobiopterin(out) + a dicarboxylate(in) = L-erythro-7,8-dihydrobiopterin(in) + a dicarboxylate(out). It catalyses the reaction L-sepiapterin(out) + a dicarboxylate(in) = L-sepiapterin(in) + a dicarboxylate(out). The enzyme catalyses prostaglandin F2alpha(out) + a dicarboxylate(in) = prostaglandin F2alpha(in) + a dicarboxylate(out). The catalysed reaction is prostaglandin E2(out) + a dicarboxylate(in) = prostaglandin E2(in) + a dicarboxylate(out). It carries out the reaction 3',5'-cyclic AMP(out) + a dicarboxylate(in) = 3',5'-cyclic AMP(in) + a dicarboxylate(out). It catalyses the reaction 3',5'-cyclic GMP(out) + a dicarboxylate(in) = 3',5'-cyclic GMP(in) + a dicarboxylate(out). The enzyme catalyses urate(out) + a dicarboxylate(in) = urate(in) + a dicarboxylate(out). The catalysed reaction is kynurenate(out) + glutarate(in) = kynurenate(in) + glutarate(out). It carries out the reaction (indol-3-yl)acetate(out) + a dicarboxylate(in) = (indol-3-yl)acetate(in) + a dicarboxylate(out). It catalyses the reaction indoxyl sulfate(out) + a dicarboxylate(in) = indoxyl sulfate(in) + a dicarboxylate(out). The enzyme catalyses N-benzoylglycine(out) + a dicarboxylate(in) = N-benzoylglycine(in) + a dicarboxylate(out). The catalysed reaction is 3-carboxy-4-methyl-5-propyl-2-furanpropanoate(out) + a dicarboxylate(in) = 3-carboxy-4-methyl-5-propyl-2-furanpropanoate(in) + a dicarboxylate(out). Secondary active transporter that functions as a Na(+)-independent organic anion (OA)/dicarboxylate antiporter where the uptake of one molecule of OA into the cell is coupled with an efflux of one molecule of intracellular dicarboxylate such as alpha-ketoglutarate or glutarate. Mediates the uptake of OA across the basolateral side of proximal tubule epithelial cells, thereby contributing to the renal elimination of endogenous OA from the systemic circulation into the urine. Function as a biopterin transporters involved in the uptake and the secretion of coenzymes tetrahydrobiopterin (BH4) dihydrobiopterin (BH2) and sepiapterin to urine, thereby determining baseline levels of blood biopterins. Transports prostaglandin E2 (PGE2) and prostaglandin F2-alpha (PGF2-alpha) and may contribute to their renal excretion. Also mediates the uptake of cyclic nucleotides such as cAMP and cGMP. Involved in the transport of neuroactive tryptophan metabolites kynurenate (KYNA) and xanthurenate (XA) and may contribute to their secretion from the brain. May transport glutamate. Also involved in the disposition of uremic toxins and potentially toxic xenobiotics by the renal organic anion secretory pathway, helping reduce their undesired toxicological effects on the body. Uremic toxins include the indoxyl sulfate (IS), hippurate, indole acetate (IA), 3-carboxy-4- methyl-5-propyl-2-furanpropionate(CMPF) and urate. Xenobiotics include the mycotoxin ochratoxin (OTA). May also contribute to the transport of organic compounds in testes across the blood-testis-barrier. May also work as a bidirectional OA/dicarboxylate exchanger. The chain is Solute carrier family 22 member 6 from Rattus norvegicus (Rat).